Consider the following 211-residue polypeptide: Arginine exporter protein ArgO (211 aa).

Helical transmembrane passes span 1 to 21 (MISY…PLGP), 37 to 57 (LMIA…GIFG), 68 to 88 (LLAL…LGAL), 111 to 131 (IIAT…DTFV), 147 to 167 (WFAL…ALLA), and 179 to 199 (AQRI…FQLA).

The protein belongs to the LysE/ArgO transporter (TC 2.A.75) family.

It localises to the cell inner membrane. It carries out the reaction L-arginine(in) = L-arginine(out). Involved in the export of arginine. Important to control the intracellular level of arginine and the correct balance between arginine and lysine. The sequence is that of Arginine exporter protein ArgO from Salmonella enteritidis PT4 (strain P125109).